Reading from the N-terminus, the 142-residue chain is Taurine up-regulated 1 protein (142 aa).

The N-terminal stretch at 1–40 is a signal peptide; sequence MARPPPLPGLVGRRSGRAVDRAIGWRLFLLLWHPALGAQA. Topologically, residues 41–123 are extracellular; it reads RPPRRAPGGR…ARTQLEGQEG (83 aa). Residues 124-140 form a helical membrane-spanning segment; the sequence is AGGWLVVGFLLCLFLLM. At 141-142 the chain is on the cytoplasmic side; the sequence is PP.

Widely expressed in the adult with highest levels in placenta and testis. Also expressed in a number of embryonic tissues at multiple embryonic stages.

The protein resides in the nucleus membrane. It is found in the mitochondrion membrane. The protein localises to the cytoplasm. The protein is Taurine up-regulated 1 protein of Mus musculus (Mouse).